A 203-amino-acid chain; its full sequence is Dephospho-CoA kinase (203 aa).

One can recognise a DPCK domain in the interval 3-202 (KIGLTGSIGM…MRIAKGDFRN (200 aa)). Residue 11-16 (GMGKST) coordinates ATP.

This sequence belongs to the CoaE family.

The protein resides in the cytoplasm. The catalysed reaction is 3'-dephospho-CoA + ATP = ADP + CoA + H(+). The protein operates within cofactor biosynthesis; coenzyme A biosynthesis; CoA from (R)-pantothenate: step 5/5. Catalyzes the phosphorylation of the 3'-hydroxyl group of dephosphocoenzyme A to form coenzyme A. The polypeptide is Dephospho-CoA kinase (Rhizobium etli (strain ATCC 51251 / DSM 11541 / JCM 21823 / NBRC 15573 / CFN 42)).